The following is a 412-amino-acid chain: G-protein coupled receptor homolog UL33 (412 aa).

Residues 1 to 29 (MDTIIHNSTRNNTPPHINDTCNMTGPLFA) are Virion surface-facing. N-linked (GlcNAc...) asparagine; by host glycans are attached at residues Asn7, Asn18, and Asn22. The helical transmembrane segment at 30–54 (IRTTEAVLNTFIIFVGGPLNAIVLI) threads the bilayer. Over 55–70 (TQLLTNRVLGYSTPTI) the chain is Intravirion. Residues 71-95 (YMTNLYSTNFLTLTVLPFIVLSNQW) form a helical membrane-spanning segment. Over 96–102 (LLPAGVA) the chain is Virion surface. Residues 103–129 (SCKFLSVIYYSSCTVGFATVALIAADR) form a helical membrane-spanning segment. Cys104 and Cys188 are joined by a disulfide. The Intravirion segment spans residues 130–138 (YRVLHKRTY). Residues 139–160 (ARQSYRSTYMILLLTWLAGLIF) form a helical membrane-spanning segment. Topologically, residues 161-203 (SVPAAVYTTVVMHHDANDTNNTNGHATCVLYFVAEEVHTVLLS) are virion surface. N-linked (GlcNAc...) asparagine; by host glycans are attached at residues Asn177 and Asn180. The chain crosses the membrane as a helical span at residues 204–224 (WKVLLTMVWGAAPVIMMTWFY). Residues 225-240 (AFFYSTVQRTSQKQRS) are Intravirion-facing. The helical transmembrane segment at 241–267 (RTLTFVSVLLISFVALQTPYVSLMIFN) threads the bilayer. The Virion surface portion of the chain corresponds to 268–281 (SYATTAWPMQCEHL). The chain crosses the membrane as a helical span at residues 282–305 (TLRRTIGTLARVVPHLHCLINPIL). Residues 306–412 (YALLGHDFLQ…SQSHHNLSGV (107 aa)) are Intravirion-facing. The disordered stretch occupies residues 377 to 412 (NFPSGTWKGGQKTASNDTSTKIPHRLSQSHHNLSGV). Residues 388–397 (KTASNDTSTK) show a composition bias toward polar residues.

The protein belongs to the G-protein coupled receptor 1 family. As to quaternary structure, heterodimerizes with US28.

Its subcellular location is the virion. The protein localises to the host cell membrane. The protein resides in the host cytoplasm. G-protein-coupled receptor (vGPCR) that constitutively activates multiple oncogenic signaling pathways including STAT3, AP-1, phospholipase C, NF-kappa-B or cAMP-responsive element (CRE) pathways. Plays an important role in viral reactivation from latency through activation of host CREB1, facilitating its recruitment to the viral major immediate early (MIE) genes. In turn, expression of the MIE-driven genes such as UL123 are de-repressed. Also facilitates virus dissemination via the extracellular and cell-to-cell route. In Human cytomegalovirus (strain AD169) (HHV-5), this protein is G-protein coupled receptor homolog UL33 (UL33).